The chain runs to 146 residues: MKLHELKAAEGANKASKRVGRGTGSGLGKTSGKGQNGQNSRSGGGVRPGFEGGQMPLYRRLPKRGFKNIFAKEYAAINLDRLNCFEDGTVVTPELLVEKRVVKKVKDGVKILGNGNIEKKLTVKAAKFSKSAIEKIEAAGGKVEVI.

Positions 1–56 (MKLHELKAAEGANKASKRVGRGTGSGLGKTSGKGQNGQNSRSGGGVRPGFEGGQMP) are disordered. 2 stretches are compositionally biased toward gly residues: residues 21–35 (RGTGSGLGKTSGKGQ) and 42–52 (SGGGVRPGFEG).

This sequence belongs to the universal ribosomal protein uL15 family. As to quaternary structure, part of the 50S ribosomal subunit.

In terms of biological role, binds to the 23S rRNA. This Clostridium botulinum (strain Langeland / NCTC 10281 / Type F) protein is Large ribosomal subunit protein uL15.